Here is a 548-residue protein sequence, read N- to C-terminus: Protein NRT1/ PTR FAMILY 2.4 (548 aa).

The next 12 helical transmembrane spans lie at 29 to 49 (TLLG…VFLI), 65 to 85 (IVNG…DSFF), 88 to 108 (IPVI…LTLI), 136 to 156 (ILYA…FILA), 172 to 192 (FFNW…TAIV), 200 to 220 (WKLG…IFVA), 316 to 336 (LVPL…QMSM), 354 to 374 (VSAG…IILN), 393 to 413 (LQKV…SAVV), 429 to 449 (VLWL…HFPA), 468 to 488 (SLTS…IDVI), and 508 to 528 (YLVL…CSWF).

Belongs to the major facilitator superfamily. Proton-dependent oligopeptide transporter (POT/PTR) (TC 2.A.17) family. In terms of tissue distribution, strongly expressed in the root stele.

It localises to the membrane. Functionally, transporter involved in a passive nitrate efflux. This Arabidopsis thaliana (Mouse-ear cress) protein is Protein NRT1/ PTR FAMILY 2.4 (NPF2.4).